A 68-amino-acid polypeptide reads, in one-letter code: DNA-directed RNA polymerase subunit Rpo10 (68 aa).

Residues C7, C10, C44, and C45 each coordinate Zn(2+).

It belongs to the archaeal Rpo10/eukaryotic RPB10 RNA polymerase subunit family. In terms of assembly, part of the RNA polymerase complex. The cofactor is Zn(2+).

The protein localises to the cytoplasm. The enzyme catalyses RNA(n) + a ribonucleoside 5'-triphosphate = RNA(n+1) + diphosphate. In terms of biological role, DNA-dependent RNA polymerase (RNAP) catalyzes the transcription of DNA into RNA using the four ribonucleoside triphosphates as substrates. The protein is DNA-directed RNA polymerase subunit Rpo10 of Methanococcus maripaludis (strain C6 / ATCC BAA-1332).